An 83-amino-acid polypeptide reads, in one-letter code: Apolipoprotein C-I, acidic form (83 aa).

The N-terminal stretch at 1-26 (MRLFLSLPVLVVVLSMVLEGPAPAQG) is a signal peptide.

It belongs to the apolipoprotein C1 family.

Its subcellular location is the secreted. The chain is Apolipoprotein C-I, acidic form (APOC1A) from Gorilla gorilla gorilla (Western lowland gorilla).